The sequence spans 307 residues: F-box protein PP2-B7 (307 aa).

The F-box domain maps to 37 to 83; it reads PLSLGDLPEECISLIISFTSPRDACVFALVSKTFESAVQSDIVWEKF.

In Arabidopsis thaliana (Mouse-ear cress), this protein is F-box protein PP2-B7 (PP2B7).